The sequence spans 112 residues: UPF0102 protein TTHA0372 (112 aa).

The protein belongs to the UPF0102 family.

This is UPF0102 protein TTHA0372 from Thermus thermophilus (strain ATCC 27634 / DSM 579 / HB8).